Reading from the N-terminus, the 179-residue chain is Large ribosomal subunit protein uL5 (179 aa).

This sequence belongs to the universal ribosomal protein uL5 family. As to quaternary structure, part of the 50S ribosomal subunit; part of the 5S rRNA/L5/L18/L25 subcomplex. Contacts the 5S rRNA and the P site tRNA. Forms a bridge to the 30S subunit in the 70S ribosome.

Its function is as follows. This is one of the proteins that bind and probably mediate the attachment of the 5S RNA into the large ribosomal subunit, where it forms part of the central protuberance. In the 70S ribosome it contacts protein S13 of the 30S subunit (bridge B1b), connecting the 2 subunits; this bridge is implicated in subunit movement. Contacts the P site tRNA; the 5S rRNA and some of its associated proteins might help stabilize positioning of ribosome-bound tRNAs. This Synechococcus elongatus (strain ATCC 33912 / PCC 7942 / FACHB-805) (Anacystis nidulans R2) protein is Large ribosomal subunit protein uL5.